We begin with the raw amino-acid sequence, 696 residues long: SLIT and NTRK-like protein 1 (696 aa).

The N-terminal stretch at 1–17 is a signal peptide; the sequence is MLLWILLLETSLCFAAG. The LRRNT 1 domain occupies 18-57; that stretch reads NVTGDVCKEKICSCNEIEGDLHVDCEKKGFTSLQRFTAPT. The Extracellular portion of the chain corresponds to 18-622; that stretch reads NVTGDVCKEK…SRVSISVLVP (605 aa). 6 LRR repeats span residues 59–80, 83–104, 106–128, 131–152, 155–176, and 178–199; these read QFYHLFLHGNSLTRLFPNEFAN, NAVSLHMENNGLHEIVPGAFLG, QLVKRLHINNNKIKSFRKQTFLG, DLEYLQADFNLLRDIDPGAFQD, KLEVLILNDNLISTLPANVFQY, and PITHLDLRGNRLKTLPYEEVLE. An LRRCT 1 domain is found at 212–263; that stretch reads NPWDCTCDLLSLKEWLENIPKNALIGRVVCEAPTRLQGKDLNETTEQDLCPL. The segment at 265–314 is disordered; it reads NRVDSSLPAPPAQEETFAPGPLPTPFKTNGQEDHATPGSAPNGGTKIPGN. The LRRNT 2 domain maps to 332–373; the sequence is NKPLANSLPCPGGCSCDHIPGSGLKMNCNNRNVSSLADLKPK. LRR repeat units follow at residues 376–397, 400–421, 424–445, 448–469, 472–493, and 495–516; these read NVQELFLRDNKIHSIRKSHFVD, NLILLDLGNNNIATVENNTFKN, DLRWLYMDSNYLDTLSREKFAG, NLEYLNVEYNAIQLILPGTFNA, KLRILILNNNLLRSLPVDVFAG, and SLSKLSLHNNYFMYLPVAGVLD. The region spanning 529–580 is the LRRCT 2 domain; it reads NPWECSCTIVPFKQWAERLGSEVLMSDLKCETPVNFFRKDFMLLSNDEICPQ. Residues 623–643 form a helical membrane-spanning segment; sequence GLLLVFVTSAFTVVGMLVFIL. Residues 644 to 696 are Cytoplasmic-facing; that stretch reads RNRKRSKRRDANSSASEINSLQTVCDSSYWHNGPYNADGAHRVYDCGSHSLSD. Ser-695 carries the post-translational modification Phosphoserine; by CK2.

Belongs to the SLITRK family. In terms of assembly, can form homodimers; homodimerization requires repeat LRR 2. Interacts with YWHAB, YWHAE, YWHAG, YWHAH, SFN, YWHAQ and YWHAZ. In terms of processing, undergoes proteolytic cleavage that results in shedding of the ectodomain and cleavage of the C-terminal cytoplasmic tail. Glycosylated. Phosphorylation at Ser-695 is necessary for proper function in promoting neurite outgrowth. Expressed predominantly in the frontal lobe of the cerebral cortex of the brain. Also expressed in some astrocytic brain tumors such as astrocytomas, oligodendrogliomas, glioblastomas, gangliogliomas and primitive neuroectodermal tumors.

It is found in the membrane. The protein resides in the secreted. The protein localises to the synapse. Functionally, it is involved in synaptogenesis and promotes excitatory synapse differentiation. Enhances neuronal dendrite outgrowth. The chain is SLIT and NTRK-like protein 1 (SLITRK1) from Homo sapiens (Human).